Here is a 280-residue protein sequence, read N- to C-terminus: F-box only protein 27 (280 aa).

Positions 20 to 67 constitute an F-box domain; the sequence is VLDLSRLPPELLLLVLSHVPPRTLLMHCRRVCRAWRALVDGQALWLLL. The FBA domain maps to 101–277; sequence FCALRPLGRN…VTNSSVIIRV (177 aa).

Part of a SCF (SKP1-cullin-F-box) protein ligase complex. Interacts with SKP1 and CUL1. Detected in brain, heart and muscle.

Its function is as follows. Substrate-recognition component of the SCF (SKP1-CUL1-F-box protein)-type E3 ubiquitin ligase complex. Able to recognize and bind complex-type oligosaccharides. This is F-box only protein 27 (Fbxo27) from Mus musculus (Mouse).